We begin with the raw amino-acid sequence, 503 residues long: Apolipoprotein N-acyltransferase (503 aa).

7 helical membrane-spanning segments follow: residues 13-32 (RWRG…LTAL), 34-54 (MPGF…LYAV), 63-83 (AFLS…WVLP), 102-122 (IVVF…FGFL), 124-144 (YFAP…YTIF), 173-193 (IVSI…NVLF), and 203-223 (LLIF…VHLL). A CN hydrolase domain is found at 231 to 460 (FKVVALQPNV…RLAGEFHIKA (230 aa)). The active-site Proton acceptor is the glutamate 273. Lysine 321 is a catalytic residue. The active-site Nucleophile is the cysteine 371. The chain crosses the membrane as a helical span at residues 468 to 488 (VRYGDWFFYLSVILAVVSVFI).

It belongs to the CN hydrolase family. Apolipoprotein N-acyltransferase subfamily.

The protein localises to the cell inner membrane. It catalyses the reaction N-terminal S-1,2-diacyl-sn-glyceryl-L-cysteinyl-[lipoprotein] + a glycerophospholipid = N-acyl-S-1,2-diacyl-sn-glyceryl-L-cysteinyl-[lipoprotein] + a 2-acyl-sn-glycero-3-phospholipid + H(+). The protein operates within protein modification; lipoprotein biosynthesis (N-acyl transfer). Functionally, catalyzes the phospholipid dependent N-acylation of the N-terminal cysteine of apolipoprotein, the last step in lipoprotein maturation. The protein is Apolipoprotein N-acyltransferase of Thermotoga maritima (strain ATCC 43589 / DSM 3109 / JCM 10099 / NBRC 100826 / MSB8).